A 190-amino-acid chain; its full sequence is MVRVSAIVGAAASVFVCLSAGAYAAEGGDNQSSAVSDRASLFGLLSGGTGQGLGIGESVDLEMMGNTYRVERPTGNPDLLKIAIKASDGSYSEVGNVNVEEVIDTMKSMQRDEDIFLRALNKGETVEEAIEDVAQAEGLNSEQTLQLEDAVSAVASVVQDEMKVIDDVQQLEKDKQQLKDDIGFLTGERE.

The N-terminal stretch at Met-1–Ala-24 is a signal peptide. N-linked (GlcNAc...) asparagine glycosylation is present at Asn-30.

The protein localises to the secreted. This is Dense granule protein 1 (GRA1) from Toxoplasma gondii.